The primary structure comprises 118 residues: Beta-2-microglobulin (118 aa).

An N-terminal signal peptide occupies residues 1–20 (MARVVALVLLGLLSLTGLEA). Residues 25-111 (PKVQVYSRHP…QHSTLKEPLI (87 aa)) enclose the Ig-like C1-type domain. Residues Cys-45 and Cys-99 are joined by a disulfide bond.

Belongs to the beta-2-microglobulin family. Heterodimer of an alpha chain and a beta chain. Beta-2-microglobulin is the beta-chain of major histocompatibility complex class I molecules.

Its subcellular location is the secreted. In terms of biological role, component of the class I major histocompatibility complex (MHC). Involved in the presentation of peptide antigens to the immune system. The protein is Beta-2-microglobulin (B2M) of Equus asinus (Donkey).